A 326-amino-acid polypeptide reads, in one-letter code: 3-methyl-2-oxobutanoate hydroxymethyltransferase 1 (326 aa).

Residues Asp52, Asp91, and Glu122 each coordinate Mg(2+). 3-methyl-2-oxobutanoate contacts are provided by residues 52-53 (DS) and Asp91. The active-site Proton acceptor is the Glu189.

It belongs to the PanB family. In terms of assembly, homodecamer; pentamer of dimers. Mg(2+) is required as a cofactor.

The protein localises to the cytoplasm. It carries out the reaction 3-methyl-2-oxobutanoate + (6R)-5,10-methylene-5,6,7,8-tetrahydrofolate + H2O = 2-dehydropantoate + (6S)-5,6,7,8-tetrahydrofolate. It participates in cofactor biosynthesis; (R)-pantothenate biosynthesis; (R)-pantoate from 3-methyl-2-oxobutanoate: step 1/2. Catalyzes the reversible reaction in which hydroxymethyl group from 5,10-methylenetetrahydrofolate is transferred onto alpha-ketoisovalerate to form ketopantoate. This is 3-methyl-2-oxobutanoate hydroxymethyltransferase 1 from Bradyrhizobium diazoefficiens (strain JCM 10833 / BCRC 13528 / IAM 13628 / NBRC 14792 / USDA 110).